Reading from the N-terminus, the 105-residue chain is Vacuolar ATPase assembly integral membrane protein VMA21 homolog (105 aa).

Residues 1-26 are disordered; that stretch reads MSTKNKKAAGGNGGAPKQTRQQSHDS. At 1–36 the chain is on the cytoplasmic side; the sequence is MSTKNKKAAGGNGGAPKQTRQQSHDSQDYSSFKTVL. Residues 37-57 form a helical membrane-spanning segment; that stretch reads FYCMLIVFLPVLTFFVLKGFV. The Lumenal segment spans residues 58-68; sequence LDQFLDISEVK. Residues 69 to 89 traverse the membrane as a helical segment; it reads VNIASAVGAVVALHIALGLYI. Residues 90–105 lie on the Cytoplasmic side of the membrane; sequence YRAYFGTTGSKASKTD.

This sequence belongs to the VMA21 family.

It is found in the endoplasmic reticulum membrane. The protein resides in the endoplasmic reticulum-Golgi intermediate compartment membrane. The protein localises to the cytoplasmic vesicle. Its subcellular location is the COPII-coated vesicle membrane. In terms of biological role, required for the assembly of the V0 complex of the vacuolar ATPase (V-ATPase) in the endoplasmic reticulum. The protein is Vacuolar ATPase assembly integral membrane protein VMA21 homolog of Drosophila erecta (Fruit fly).